A 199-amino-acid chain; its full sequence is VAMP-like protein YKT61 (199 aa).

Positions 7–133 (LVLKCAPEAS…LTEALNKFQD (127 aa)) constitute a Longin domain. The v-SNARE coiled-coil homology domain occupies 139 to 199 (KLLKIQRELD…KKTNSCCTIL (61 aa)). A lipid anchor (S-palmitoyl cysteine) is attached at C195. A Cysteine methyl ester modification is found at C196. The S-geranylgeranyl cysteine moiety is linked to residue C196. Positions 197-199 (TIL) are cleaved as a propeptide — removed in mature form.

This sequence belongs to the synaptobrevin family. In terms of assembly, interacts with SYP41. Core constituent of the SNARE complex required for membrane fusion at the trans-Golgi network. In terms of tissue distribution, expressed ubiquitously in roots, stems, flowers and leaves.

It is found in the cell membrane. Its function is as follows. May be involved in the secretory pathway. Essential for membrane fusion mediated by either SYP41 or SYP61; triggers the fusion of phospholipid vesicles containing SYP41 or SYP61 and VTI12. The sequence is that of VAMP-like protein YKT61 from Arabidopsis thaliana (Mouse-ear cress).